The following is a 253-amino-acid chain: Trans-aconitate 2-methyltransferase (253 aa).

The protein belongs to the methyltransferase superfamily. Tam family.

Its subcellular location is the cytoplasm. The enzyme catalyses trans-aconitate + S-adenosyl-L-methionine = (E)-3-(methoxycarbonyl)pent-2-enedioate + S-adenosyl-L-homocysteine. Its function is as follows. Catalyzes the S-adenosylmethionine monomethyl esterification of trans-aconitate. This is Trans-aconitate 2-methyltransferase from Azoarcus sp. (strain BH72).